Here is a 278-residue protein sequence, read N- to C-terminus: MTVLHSVDFFPSGKAPVAIEPRLPQSAFPEHHHDFHEIVIVEHGTGIHVFNGQPYTISGGTVCFVRDHDRHLYEHTDNLCLTNVLYRSPDAFQFLAGLNQLLPQEQDGQYPSHWRVNQSALQQVRQLVAQMENAGDEMDTPAVANREILFMQLLVLLRKSSLMEGAANNDARLNQLLAWLEDHFAEEVCWESIADKFSLSLRTLHRQLKQQTGLTPQRYLNRLRLIKARHLLRHSDESVTDIAYRCGFGDSNHFSTLFRREFDWSPRDIRQGRDALLQ.

The HTH araC/xylS-type domain maps to 174-272 (NQLLAWLEDH…DWSPRDIRQG (99 aa)). DNA-binding regions (H-T-H motif) lie at residues 191–212 (ESIA…KQQT) and 239–262 (VTDI…RREF).

In terms of assembly, binds DNA as a dimer.

It is found in the cytoplasm. Its function is as follows. Activates expression of the rhaBAD and rhaT operons. This is HTH-type transcriptional activator RhaS from Citrobacter koseri (strain ATCC BAA-895 / CDC 4225-83 / SGSC4696).